Reading from the N-terminus, the 1646-residue chain is Monensin-resistant homolog 2 (1646 aa).

Belongs to the MON2 family.

It localises to the golgi apparatus. Functionally, may be required for traffic between late Golgi and early endosomes. This is Monensin-resistant homolog 2 (mon-2) from Caenorhabditis elegans.